The sequence spans 59 residues: UPF0434 protein lpl1884 (59 aa).

This sequence belongs to the UPF0434 family.

This is UPF0434 protein lpl1884 from Legionella pneumophila (strain Lens).